Reading from the N-terminus, the 66-residue chain is UPF0337 protein RPA4217 (66 aa).

Belongs to the UPF0337 (CsbD) family.

The sequence is that of UPF0337 protein RPA4217 from Rhodopseudomonas palustris (strain ATCC BAA-98 / CGA009).